The primary structure comprises 235 residues: Transmembrane protein 215 (235 aa).

A run of 2 helical transmembrane segments spans residues 12–32 (LVVA…VSGM) and 40–60 (IPLL…IALA). Residues 99-158 (SDLESGKGSSDELAKKAGLRGKPSLQGQGELPMASSITTPTPMEEGECQSPGQSGRREET) are disordered.

Its subcellular location is the membrane. The protein is Transmembrane protein 215 (TMEM215) of Bos taurus (Bovine).